A 392-amino-acid polypeptide reads, in one-letter code: NADH-quinone oxidoreductase subunit D (392 aa).

The protein belongs to the complex I 49 kDa subunit family. As to quaternary structure, NDH-1 is composed of 14 different subunits. Subunits NuoB, C, D, E, F, and G constitute the peripheral sector of the complex.

It localises to the cell inner membrane. It catalyses the reaction a quinone + NADH + 5 H(+)(in) = a quinol + NAD(+) + 4 H(+)(out). Its function is as follows. NDH-1 shuttles electrons from NADH, via FMN and iron-sulfur (Fe-S) centers, to quinones in the respiratory chain. The immediate electron acceptor for the enzyme in this species is believed to be ubiquinone. Couples the redox reaction to proton translocation (for every two electrons transferred, four hydrogen ions are translocated across the cytoplasmic membrane), and thus conserves the redox energy in a proton gradient. This is NADH-quinone oxidoreductase subunit D from Parvibaculum lavamentivorans (strain DS-1 / DSM 13023 / NCIMB 13966).